The sequence spans 579 residues: Basic helix-loop-helix ARNT-like protein 2 (579 aa).

The segment at 1 to 198 (MEFPRKRRGR…SPREKPIDTK (198 aa)) is interaction with PER2. The Nuclear localization signal signature appears at 4–9 (PRKRRG). The disordered stretch occupies residues 40–61 (RTGVSAPSGIREAHSQMEKRRR). The bHLH domain occupies 48 to 101 (GIREAHSQMEKRRRDKMNHLIQKLSSMIPPHIPTAHKLDKLSVLRRAVQYLRSL). The segment covering 50–59 (REAHSQMEKR) has biased composition (basic and acidic residues). Positions 118 to 128 (IQDKELSHLIL) match the Nuclear export signal 1 motif. The PAS 1 domain maps to 119 to 190 (QDKELSHLIL…KEQLSCDGSP (72 aa)). Basic and acidic residues predominate over residues 186 to 196 (CDGSPREKPID). The segment at 186-213 (CDGSPREKPIDTKTSQVYSHPYTGRPRM) is disordered. A Glycyl lysine isopeptide (Lys-Gly) (interchain with G-Cter in SUMO2 and SUMO3) cross-link involves residue K226. K233 is covalently cross-linked (Glycyl lysine isopeptide (Lys-Gly) (interchain with G-Cter in SUMO2)). Positions 296-366 (VPQKSGKINV…DKHKAVLQSK (71 aa)) constitute a PAS 2 domain. Positions 331 to 339 (LGYLPQELL) match the Nuclear export signal 2 motif. A PAC domain is found at 371-414 (TDSYKFRVKDGAFVTLKSEWFSFTNPWTKELEYIVSVNTLVLGR). Residues 469–536 (RLHSSSPEDA…AHPHGPLPGD (68 aa)) are disordered.

In terms of assembly, component of the circadian core oscillator, which includes the CRY proteins, CLOCK, or NPAS2, BMAL1 or BMAL2, CSNK1D and/or CSNK1E, TIMELESS and the PER proteins. Interacts directly with CLOCK to form the BMAL2-CLOCK transactivator. Can form heterodimers or homodimers which interact directly with CLOCK to form the transcription activator. Interacts with NPAS2 and HIF1A. Interacts with PER2. In terms of tissue distribution, expressed in the suprachiasmatic nucleus (SCN).

The protein resides in the nucleus. Transcriptional activator which forms a core component of the circadian clock. The circadian clock, an internal time-keeping system, regulates various physiological processes through the generation of approximately 24 hour circadian rhythms in gene expression, which are translated into rhythms in metabolism and behavior. It is derived from the Latin roots 'circa' (about) and 'diem' (day) and acts as an important regulator of a wide array of physiological functions including metabolism, sleep, body temperature, blood pressure, endocrine, immune, cardiovascular, and renal function. Consists of two major components: the central clock, residing in the suprachiasmatic nucleus (SCN) of the brain, and the peripheral clocks that are present in nearly every tissue and organ system. Both the central and peripheral clocks can be reset by environmental cues, also known as Zeitgebers (German for 'timegivers'). The predominant Zeitgeber for the central clock is light, which is sensed by retina and signals directly to the SCN. The central clock entrains the peripheral clocks through neuronal and hormonal signals, body temperature and feeding-related cues, aligning all clocks with the external light/dark cycle. Circadian rhythms allow an organism to achieve temporal homeostasis with its environment at the molecular level by regulating gene expression to create a peak of protein expression once every 24 hours to control when a particular physiological process is most active with respect to the solar day. Transcription and translation of core clock components (CLOCK, NPAS2, BMAL1, BMAL2, PER1, PER2, PER3, CRY1 and CRY2) plays a critical role in rhythm generation, whereas delays imposed by post-translational modifications (PTMs) are important for determining the period (tau) of the rhythms (tau refers to the period of a rhythm and is the length, in time, of one complete cycle). A diurnal rhythm is synchronized with the day/night cycle, while the ultradian and infradian rhythms have a period shorter and longer than 24 hours, respectively. Disruptions in the circadian rhythms contribute to the pathology of cardiovascular diseases, cancer, metabolic syndromes and aging. A transcription/translation feedback loop (TTFL) forms the core of the molecular circadian clock mechanism. Transcription factors, CLOCK or NPAS2 and BMAL1 or BMAL2, form the positive limb of the feedback loop, act in the form of a heterodimer and activate the transcription of core clock genes and clock-controlled genes (involved in key metabolic processes), harboring E-box elements (5'-CACGTG-3') within their promoters. The core clock genes: PER1/2/3 and CRY1/2 which are transcriptional repressors form the negative limb of the feedback loop and interact with the CLOCK|NPAS2-BMAL1|BMAL2 heterodimer inhibiting its activity and thereby negatively regulating their own expression. This heterodimer also activates nuclear receptors NR1D1/2 and RORA/B/G, which form a second feedback loop and which activate and repress BMAL1 transcription, respectively. The CLOCK-BMAL2 heterodimer activates the transcription of SERPINE1/PAI1 and BHLHE40/DEC1. In Mus musculus (Mouse), this protein is Basic helix-loop-helix ARNT-like protein 2 (Bmal2).